A 214-amino-acid chain; its full sequence is Thymidylate kinase (214 aa).

10–17 (GPDGAGKT) provides a ligand contact to ATP.

It belongs to the thymidylate kinase family.

It carries out the reaction dTMP + ATP = dTDP + ADP. Phosphorylation of dTMP to form dTDP in both de novo and salvage pathways of dTTP synthesis. The sequence is that of Thymidylate kinase from Limosilactobacillus fermentum (strain NBRC 3956 / LMG 18251) (Lactobacillus fermentum).